Reading from the N-terminus, the 398-residue chain is Histidinol dehydrogenase (398 aa).

Residues Tyr114, Gln176, and Asn199 each coordinate NAD(+). Residues Thr222, Gln244, and His247 each contribute to the substrate site. 2 residues coordinate Zn(2+): Gln244 and His247. Residues Glu298 and His299 each act as proton acceptor in the active site. Residues His299, Asp331, Glu384, and His389 each contribute to the substrate site. Asp331 is a binding site for Zn(2+). His389 contributes to the Zn(2+) binding site.

The protein belongs to the histidinol dehydrogenase family. It depends on Zn(2+) as a cofactor.

It carries out the reaction L-histidinol + 2 NAD(+) + H2O = L-histidine + 2 NADH + 3 H(+). It participates in amino-acid biosynthesis; L-histidine biosynthesis; L-histidine from 5-phospho-alpha-D-ribose 1-diphosphate: step 9/9. Catalyzes the sequential NAD-dependent oxidations of L-histidinol to L-histidinaldehyde and then to L-histidine. This is Histidinol dehydrogenase (hisD) from Saccharolobus solfataricus (strain ATCC 35092 / DSM 1617 / JCM 11322 / P2) (Sulfolobus solfataricus).